Here is a 162-residue protein sequence, read N- to C-terminus: Caveolin-2 (162 aa).

Residues 1-86 lie on the Cytoplasmic side of the membrane; sequence MGLETEKADV…FEISKYVMYK (86 aa). Tyr19 carries the phosphotyrosine modification. A phosphoserine mark is found at Ser20 and Ser36. An intramembrane region (helical) is located at residues 87 to 107; sequence FLTVFLAIPLAFVAGILFATL. Topologically, residues 108-162 are cytoplasmic; it reads SCLHIWIIMPFVKTCLMVLPSVQTIWKSVTDVIIAPLCTSVGRSFSSISLQLSHD.

It belongs to the caveolin family. In terms of assembly, homodimer. Caveolin-1 and -2 colocalize and form a stable hetero-oligomeric complex.

The protein resides in the golgi apparatus membrane. Its subcellular location is the cell membrane. It localises to the membrane. The protein localises to the caveola. Its function is as follows. May act as a scaffolding protein within caveolar membranes. Interacts directly with G-protein alpha subunits and can functionally regulate their activity. Caveolin-2 may function as an accessory protein in conjunction with caveolin-1. The polypeptide is Caveolin-2 (CAV2) (Microcebus murinus (Gray mouse lemur)).